Here is a 264-residue protein sequence, read N- to C-terminus: 3-methyl-2-oxobutanoate hydroxymethyltransferase (264 aa).

The Mg(2+) site is built by aspartate 45 and aspartate 84. Residues aspartate 45–serine 46, aspartate 84, and lysine 112 contribute to the 3-methyl-2-oxobutanoate site. Position 114 (glutamate 114) interacts with Mg(2+). Glutamate 181 functions as the Proton acceptor in the catalytic mechanism.

This sequence belongs to the PanB family. Homodecamer; pentamer of dimers. Mg(2+) is required as a cofactor.

It is found in the cytoplasm. The catalysed reaction is 3-methyl-2-oxobutanoate + (6R)-5,10-methylene-5,6,7,8-tetrahydrofolate + H2O = 2-dehydropantoate + (6S)-5,6,7,8-tetrahydrofolate. It participates in cofactor biosynthesis; (R)-pantothenate biosynthesis; (R)-pantoate from 3-methyl-2-oxobutanoate: step 1/2. Catalyzes the reversible reaction in which hydroxymethyl group from 5,10-methylenetetrahydrofolate is transferred onto alpha-ketoisovalerate to form ketopantoate. The protein is 3-methyl-2-oxobutanoate hydroxymethyltransferase of Escherichia coli O17:K52:H18 (strain UMN026 / ExPEC).